The primary structure comprises 445 residues: Histidinol dehydrogenase (445 aa).

Residues Tyr130, Gln192, and Asn215 each coordinate NAD(+). Positions 238, 260, and 263 each coordinate substrate. Gln260 and His263 together coordinate Zn(2+). Active-site proton acceptor residues include Glu328 and His329. The substrate site is built by His329, Asp362, Glu416, and His421. Residue Asp362 coordinates Zn(2+). His421 serves as a coordination point for Zn(2+).

This sequence belongs to the histidinol dehydrogenase family. Zn(2+) is required as a cofactor.

It carries out the reaction L-histidinol + 2 NAD(+) + H2O = L-histidine + 2 NADH + 3 H(+). It participates in amino-acid biosynthesis; L-histidine biosynthesis; L-histidine from 5-phospho-alpha-D-ribose 1-diphosphate: step 9/9. Functionally, catalyzes the sequential NAD-dependent oxidations of L-histidinol to L-histidinaldehyde and then to L-histidine. This Gloeobacter violaceus (strain ATCC 29082 / PCC 7421) protein is Histidinol dehydrogenase.